A 191-amino-acid polypeptide reads, in one-letter code: Dephospho-CoA kinase (191 aa).

Positions 3-191 (AIGITGSYAS…KLIKNLECQV (189 aa)) constitute a DPCK domain. ATP is bound at residue 11–16 (ASGKTF).

It belongs to the CoaE family.

It is found in the cytoplasm. It carries out the reaction 3'-dephospho-CoA + ATP = ADP + CoA + H(+). Its pathway is cofactor biosynthesis; coenzyme A biosynthesis; CoA from (R)-pantothenate: step 5/5. Catalyzes the phosphorylation of the 3'-hydroxyl group of dephosphocoenzyme A to form coenzyme A. This chain is Dephospho-CoA kinase, found in Rickettsia typhi (strain ATCC VR-144 / Wilmington).